We begin with the raw amino-acid sequence, 518 residues long: Protein nucleotidyltransferase YdiU (518 aa).

The ATP site is built by Gly100, Gly102, Arg103, Lys123, Asp135, Gly136, Arg193, and Arg200. Asp270 functions as the Proton acceptor in the catalytic mechanism. Mg(2+) is bound by residues Asn271 and Asp280. Asp280 is a binding site for ATP.

The protein belongs to the SELO family. Requires Mg(2+) as cofactor. Mn(2+) serves as cofactor.

It carries out the reaction L-seryl-[protein] + ATP = 3-O-(5'-adenylyl)-L-seryl-[protein] + diphosphate. It catalyses the reaction L-threonyl-[protein] + ATP = 3-O-(5'-adenylyl)-L-threonyl-[protein] + diphosphate. The catalysed reaction is L-tyrosyl-[protein] + ATP = O-(5'-adenylyl)-L-tyrosyl-[protein] + diphosphate. The enzyme catalyses L-histidyl-[protein] + UTP = N(tele)-(5'-uridylyl)-L-histidyl-[protein] + diphosphate. It carries out the reaction L-seryl-[protein] + UTP = O-(5'-uridylyl)-L-seryl-[protein] + diphosphate. It catalyses the reaction L-tyrosyl-[protein] + UTP = O-(5'-uridylyl)-L-tyrosyl-[protein] + diphosphate. In terms of biological role, nucleotidyltransferase involved in the post-translational modification of proteins. It can catalyze the addition of adenosine monophosphate (AMP) or uridine monophosphate (UMP) to a protein, resulting in modifications known as AMPylation and UMPylation. The sequence is that of Protein nucleotidyltransferase YdiU from Xanthomonas oryzae pv. oryzae (strain PXO99A).